A 398-amino-acid polypeptide reads, in one-letter code: Phosphoglycerate kinase (398 aa).

Substrate is bound by residues 21-23 (DFN), Arg-36, 59-62 (HLGR), Arg-119, and Arg-157. ATP is bound by residues Lys-208, Gly-296, Glu-327, and 354-357 (GGDS).

It belongs to the phosphoglycerate kinase family. As to quaternary structure, monomer.

It localises to the cytoplasm. It carries out the reaction (2R)-3-phosphoglycerate + ATP = (2R)-3-phospho-glyceroyl phosphate + ADP. Its pathway is carbohydrate degradation; glycolysis; pyruvate from D-glyceraldehyde 3-phosphate: step 2/5. In Streptococcus pneumoniae serotype 2 (strain D39 / NCTC 7466), this protein is Phosphoglycerate kinase.